Reading from the N-terminus, the 642-residue chain is Threonine--tRNA ligase (642 aa).

A TGS domain is found at 1 to 61 (MPIITLPDGS…TEDAELQLIT (61 aa)). Residues 242–535 (DHRKLGKSLD…LVEHYEGKFP (294 aa)) form a catalytic region. The Zn(2+) site is built by cysteine 333, histidine 384, and histidine 512.

This sequence belongs to the class-II aminoacyl-tRNA synthetase family. Homodimer. Requires Zn(2+) as cofactor.

The protein resides in the cytoplasm. The catalysed reaction is tRNA(Thr) + L-threonine + ATP = L-threonyl-tRNA(Thr) + AMP + diphosphate + H(+). Catalyzes the attachment of threonine to tRNA(Thr) in a two-step reaction: L-threonine is first activated by ATP to form Thr-AMP and then transferred to the acceptor end of tRNA(Thr). Also edits incorrectly charged L-seryl-tRNA(Thr). The sequence is that of Threonine--tRNA ligase from Hydrogenovibrio crunogenus (strain DSM 25203 / XCL-2) (Thiomicrospira crunogena).